The primary structure comprises 415 residues: Pectin acetylesterase 12 (415 aa).

The signal sequence occupies residues 1–20 (MVKLLLVGFVVAGIILGTQA). Residue Asn27 is glycosylated (N-linked (GlcNAc...) asparagine). Catalysis depends on charge relay system residues Ser197, Asp293, and His360.

It belongs to the pectinacetylesterase family.

It localises to the secreted. The protein localises to the cell wall. Its function is as follows. Hydrolyzes acetyl esters in homogalacturonan regions of pectin. In type I primary cell wall, galacturonic acid residues of pectin can be acetylated at the O-2 and O-3 positions. Decreasing the degree of acetylation of pectin gels in vitro alters their physical properties. The protein is Pectin acetylesterase 12 of Arabidopsis thaliana (Mouse-ear cress).